The chain runs to 156 residues: Phosphopantetheine adenylyltransferase (156 aa).

T9 contributes to the substrate binding site. Residues 9–10 (TF) and H17 contribute to the ATP site. Substrate contacts are provided by K41, L73, and R87. Residues 88-90 (GVR), E98, and 123-129 (WAFVSST) each bind ATP.

Belongs to the bacterial CoaD family. As to quaternary structure, homohexamer. It depends on Mg(2+) as a cofactor.

It localises to the cytoplasm. The enzyme catalyses (R)-4'-phosphopantetheine + ATP + H(+) = 3'-dephospho-CoA + diphosphate. The protein operates within cofactor biosynthesis; coenzyme A biosynthesis; CoA from (R)-pantothenate: step 4/5. Functionally, reversibly transfers an adenylyl group from ATP to 4'-phosphopantetheine, yielding dephospho-CoA (dPCoA) and pyrophosphate. This Haemophilus influenzae (strain ATCC 51907 / DSM 11121 / KW20 / Rd) protein is Phosphopantetheine adenylyltransferase.